A 313-amino-acid polypeptide reads, in one-letter code: Nematocyst expressed protein 8 (313 aa).

Residues 1–19 (MLRRPLLLVLFTVFSTLYA) form the signal peptide. The tract at residues 24 to 56 (GVSPPTNESEAEVSPGDDEGPPEPGNEPDVNWR) is disordered. Residues 32-44 (SEAEVSPGDDEGP) are compositionally biased toward acidic residues. ShKT domains are found at residues 65–99 (CKDK…CRFC), 109–145 (CKDL…CELC), and 151–186 (FKYT…CRKY). Cystine bridges form between cysteine 65–cysteine 99, cysteine 72–cysteine 92, cysteine 81–cysteine 96, cysteine 109–cysteine 145, cysteine 127–cysteine 142, cysteine 160–cysteine 179, and cysteine 169–cysteine 183. A compositionally biased stretch (low complexity) spans 222 to 244 (TAAPSTQPAETTKAPPNTAAPTA). The segment at 222–313 (TAAPSTQPAE…LCDEKHSSQQ (92 aa)) is disordered. The span at 245–265 (APTPAPTPAPAPAPTPAPVAP) shows a compositional bias: pro residues. Residues 280-297 (TPEEQDDNSADESTEIEA) show a composition bias toward acidic residues.

This sequence belongs to the NEP3 family. In terms of tissue distribution, nematocytes. In late planulae, is only expressed in a handful of nematocytes in the lower pharynx. Is absent from the tentacles and outer body wall.

It localises to the nematocyst. Its subcellular location is the secreted. Probable toxin probably only used for predation. This chain is Nematocyst expressed protein 8, found in Nematostella vectensis (Starlet sea anemone).